Consider the following 550-residue polypeptide: Glypican-1 (550 aa).

The signal sequence occupies residues M1 to G20. 7 cysteine pairs are disulfide-bonded: C29-C65, C59-C253, C66-C256, C188-C340, C243-C276, C265-C412, and C269-C398. N76 and N113 each carry an N-linked (GlcNAc...) asparagine glycan. An N-linked (GlcNAc...) asparagine glycan is attached at N382. Disordered regions lie at residues F475–D494 and K502–V522. Over residues D481–D494 the composition is skewed to low complexity. O-linked (Xyl...) (heparan sulfate) serine glycans are attached at residues S483, S485, and S487. A lipid anchor (GPI-anchor amidated glycine) is attached at G524. Residues A525 to R550 constitute a propeptide, removed in mature form.

Belongs to the glypican family. O-glycosylated with heparan sulfate.

Its subcellular location is the cell membrane. The protein localises to the endosome. The protein resides in the secreted. It localises to the extracellular space. Functionally, cell surface proteoglycan that bears heparan sulfate. Modulates Wnt-signaling pathway. This Gallus gallus (Chicken) protein is Glypican-1 (GPC1).